The sequence spans 1168 residues: ATP-dependent DNA helicase mph1 (1168 aa).

Composition is skewed to polar residues over residues 24-38 and 59-68; these read NITSHHPSNSKQLAS and PTVSQGQATA. Residues 24-132 are disordered; that stretch reads NITSHHPSNS…PFRADMPPEQ (109 aa). Residues 71–88 show a composition bias toward low complexity; the sequence is RAKTASKPTTSATTSRPS. The span at 89-104 shows a compositional bias: polar residues; the sequence is LAQSSQRKNLRQTTLW. The Helicase ATP-binding domain maps to 162–330; that stretch reads IVKNGLFNNT…DVIDNLGISH (169 aa). 175-182 contacts ATP; the sequence is LPTGLGKT. Residues 278–281 carry the DEAH box motif; sequence DEAH. In terms of domain architecture, Helicase C-terminal spans 506–665; that stretch reads LVNHFMDAGE…GSRFTFRHDL (160 aa). Disordered stretches follow at residues 690–717 and 830–1168; these read SQNPELPEPKRSAARMRTKPAKKKFNMP and APAN…DDQE. Residues 701-714 are compositionally biased toward basic residues; that stretch reads SAARMRTKPAKKKF. Polar residues predominate over residues 895 to 907; the sequence is TAKTKSTGVSKQT. The segment covering 920–936 has biased composition (acidic residues); the sequence is DCEEGGNEYDGNVDDDE. Residues 941-959 show a composition bias toward basic residues; the sequence is RNFRSKGRGRGSGRGKKSQ. The span at 985–996 shows a compositional bias: acidic residues; the sequence is GSDDGADLEDFI. Residues 1001–1030 are compositionally biased toward polar residues; it reads EVTSSLQHRPRGSTSPTTAPDAGSSSLSSK.

This sequence belongs to the DEAD box helicase family. DEAH subfamily. FANCM sub-subfamily. As to quaternary structure, interacts with the MHF histone-fold complex to form the FANCM-MHF complex.

It localises to the nucleus. The enzyme catalyses ATP + H2O = ADP + phosphate + H(+). ATP-dependent DNA helicase involved in DNA damage repair by homologous recombination and in genome maintenance. Capable of unwinding D-loops. Plays a role in limiting crossover recombinants during mitotic DNA double-strand break (DSB) repair. Component of a FANCM-MHF complex which promotes gene conversion at blocked replication forks, probably by reversal of the stalled fork. This is ATP-dependent DNA helicase mph1 from Neurospora crassa (strain ATCC 24698 / 74-OR23-1A / CBS 708.71 / DSM 1257 / FGSC 987).